We begin with the raw amino-acid sequence, 754 residues long: MSKRIIQSVLSVSVLASMMSMAFAAQNEQEQAEQTLEKPAEPVKLETIFVTAEEQVKQSLGVSVITKEDLEKLPVRNDISDYVRRMPGVNLTGNSATGQRGNNRQIDIRGMGPENTLILVDGKPINSRNSVRYGWKGERDTRGDSNWVPAEAIESIEVLRGPAAARYGSGAAGGVVNIITKKVTNETHGSVEFYTSQPEDSKEGSSNRVGFNVSGPLIKDVLSYRLYGNYNKTEADDVDINKSIGSTAAGREGVKNKDISGRLAWQATDQQTVLLDISSSKQGNIYSGDSQLNANAEADAILSQLIGKETNTMYRDSYALTHEGDWSWGKSKLVAQYDKTHNKRLPEGLAGSVEGKINNLDDKATSRLETLRFNGEANIPFEYYLPQVLTVGTEWVEDRFKDNVSTTQGKDSSGSGYGDQLAKGDRSKMESRIASAYIEDNLKVTDSTDVVLGLRFDDHSKSGSNWSPSLNITQKLNDYFTLKGGVAKAYKAPNMYQNAEGYLLSTNGNGCPANIESRCLLQGNGDLKPETSVNKELGIQFQKDIVNASLTWFRNDYKDKIVAGTHVVGTVDGSSTNANTGAVTNTKWNILRWENTPKALIQGFEGSLGLDFGDIRWTNNFTYMMDSKDKQTGNPLSLVPIYTINSIFDYDITDQLDVNFVFTQYGRQKSRQFAENRLESGIGSGGANSALKPSTVKSYSTAGINVGYKFSDQISTRVGVSNLFDKQILRDSNSISQTYNEPGRAYYASLKYSF.

The first 24 residues, Met-1–Ala-24, serve as a signal peptide directing secretion. Positions Glu-54–Lys-181 constitute a TBDR plug domain. The TBDR beta-barrel domain occupies Glu-186–Phe-754. The span at Val-404 to Gly-414 shows a compositional bias: polar residues. A disordered region spans residues Val-404–Gly-424. Cys-511 and Cys-519 are oxidised to a cystine. A TonB C-terminal box motif is present at residues Gln-737 to Phe-754.

Belongs to the TonB-dependent receptor family.

It localises to the cell outer membrane. Its function is as follows. Probably involved in the initial step of iron uptake by binding iron chelating siderophores, thereby allowing extraction of iron from the environment. May bind the siderophore, ferric enterobactin, with micromolar affinity. The protein is Probable TonB-dependent siderophore receptor PirA of Acinetobacter baumannii (strain ATCC 19606 / DSM 30007 / JCM 6841 / CCUG 19606 / CIP 70.34 / NBRC 109757 / NCIMB 12457 / NCTC 12156 / 81).